The primary structure comprises 184 residues: Putative pre-16S rRNA nuclease (184 aa).

A disordered region spans residues M1–P23.

The protein belongs to the YqgF nuclease family.

Its subcellular location is the cytoplasm. Its function is as follows. Could be a nuclease involved in processing of the 5'-end of pre-16S rRNA. The chain is Putative pre-16S rRNA nuclease from Mycobacterium leprae (strain Br4923).